Here is a 129-residue protein sequence, read N- to C-terminus: Glycine cleavage system H protein (129 aa).

The region spanning 24-106 (TYTVGITEHA…YVGGWIFKIK (83 aa)) is the Lipoyl-binding domain. Lys-65 carries the N6-lipoyllysine modification.

This sequence belongs to the GcvH family. In terms of assembly, the glycine cleavage system is composed of four proteins: P, T, L and H. It depends on (R)-lipoate as a cofactor.

The glycine cleavage system catalyzes the degradation of glycine. The H protein shuttles the methylamine group of glycine from the P protein to the T protein. This Salmonella paratyphi B (strain ATCC BAA-1250 / SPB7) protein is Glycine cleavage system H protein.